Consider the following 275-residue polypeptide: uncharacterized protein (275 aa).

Helical transmembrane passes span 15 to 35, 39 to 59, and 70 to 90; these read LFLP…FLGS, AIMI…FGLF, and ILYL…VVYL. The tract at residues 140-191 is disordered; sequence SSKTDMDSQVAEAPQTEEGEPSVNQVPQEAGASHRVGPYQDQGLATDRNGNP.

Its subcellular location is the mitochondrion membrane. This is an uncharacterized protein from Arabidopsis thaliana (Mouse-ear cress).